Reading from the N-terminus, the 263-residue chain is Adaptin ear-binding coat-associated protein 2 (263 aa).

Disordered stretches follow at residues Lys-166–Gly-194 and Ala-219–Phe-263. Residue Ser-181 is modified to Phosphoserine. 2 short sequence motifs (WXXF motif) span residues Trp-240–Phe-243 and Trp-260–Phe-263. Low complexity predominate over residues Ser-246–Phe-263.

The protein belongs to the NECAP family. In terms of assembly, interacts with AP1G1 and AP2A1 components of the adapter protein complexes AP-1 and AP-2. Interacts with the GAE domain proteins GGA1, GGA2 and GGA3.

Its subcellular location is the cytoplasmic vesicle. The protein resides in the clathrin-coated vesicle membrane. It localises to the cell membrane. In terms of biological role, involved in endocytosis. This chain is Adaptin ear-binding coat-associated protein 2 (NECAP2), found in Homo sapiens (Human).